The sequence spans 562 residues: Formate--tetrahydrofolate ligase (562 aa).

71–78 (TPAGEGKS) lines the ATP pocket.

Belongs to the formate--tetrahydrofolate ligase family.

It catalyses the reaction (6S)-5,6,7,8-tetrahydrofolate + formate + ATP = (6R)-10-formyltetrahydrofolate + ADP + phosphate. Its pathway is one-carbon metabolism; tetrahydrofolate interconversion. The protein is Formate--tetrahydrofolate ligase of Bacillus cereus (strain ATCC 14579 / DSM 31 / CCUG 7414 / JCM 2152 / NBRC 15305 / NCIMB 9373 / NCTC 2599 / NRRL B-3711).